Consider the following 314-residue polypeptide: Olfactory receptor 52B4 (314 aa).

At 1 to 27 the chain is on the extracellular side; sequence MPTVNHSGTSHTVFHLLGIPGLQDQHM. A glycan (N-linked (GlcNAc...) asparagine) is linked at N5. The chain crosses the membrane as a helical span at residues 28 to 48; sequence WISIPFFISYVTALLGNSLLI. Residues 49-56 are Cytoplasmic-facing; sequence FIILTKRS. Residues 57-77 form a helical membrane-spanning segment; it reads LHEPMYLFLCMLAGADIVLST. Over 78–101 the chain is Extracellular; it reads CTIPQALAIFWFRAGDISLDRCIT. An intrachain disulfide couples C99 to C191. Residues 102–122 traverse the membrane as a helical segment; sequence QLFFIHSTFISESGILLVMAF. Topologically, residues 123–141 are cytoplasmic; that stretch reads DHYIAICYPLRYTTILTNA. The helical transmembrane segment at 142–162 threads the bilayer; the sequence is LIKKICVTVSLRSYGTIFPII. Residues 163 to 198 lie on the Extracellular side of the membrane; the sequence is FLLKRLTFCQNNIIPHTFCEHIGLAKYACNDIRINI. The chain crosses the membrane as a helical span at residues 199–219; it reads WYGFSILMSTVVLDVVLIFIS. Residues 220–239 lie on the Cytoplasmic side of the membrane; sequence YMLILHAVFHMPSPDACHKA. A helical membrane pass occupies residues 240 to 260; it reads LNTFGSHVCIIILFYGSGIFT. Residues 261–275 lie on the Extracellular side of the membrane; the sequence is ILTQRFGRHIPPCIH. Residues 276–296 form a helical membrane-spanning segment; sequence IPLANVCILAPPMLNPIIYGI. At 297 to 314 the chain is on the cytoplasmic side; sequence KTKQIQEQVVQFLFIKQK.

It belongs to the G-protein coupled receptor 1 family.

The protein localises to the cell membrane. In terms of biological role, odorant receptor. The polypeptide is Olfactory receptor 52B4 (OR52B4) (Homo sapiens (Human)).